Consider the following 135-residue polypeptide: Protein Wnt-7b (135 aa).

Intrachain disulfides connect Cys3–Cys17 and Cys5–Cys12. A lipid anchor (O-palmitoleoyl serine; by PORCN) is attached at Ser9. The segment at 41 to 69 (VEVVRANRLRQPTFLKIKKVRSYQKPMET) is disordered linker. 3 cysteine pairs are disulfide-bonded: Cys81–Cys112, Cys97–Cys107, and Cys134–Cys135. The N-linked (GlcNAc...) asparagine glycan is linked to Asn98.

This sequence belongs to the Wnt family. In terms of processing, palmitoleoylation is required for efficient binding to frizzled receptors. Depalmitoleoylation leads to Wnt signaling pathway inhibition. In terms of tissue distribution, in adults, in brain and lung.

It localises to the secreted. It is found in the extracellular space. The protein localises to the extracellular matrix. Functionally, ligand for members of the frizzled family of seven transmembrane receptors that functions in the canonical Wnt/beta-catenin signaling pathway. Required for normal fusion of the chorion and the allantois during placenta development. Required for central nervous system (CNS) angiogenesis and blood-brain barrier regulation. The polypeptide is Protein Wnt-7b (wnt7b) (Xenopus laevis (African clawed frog)).